The chain runs to 330 residues: Phenylalanine--tRNA ligase alpha subunit (330 aa).

Position 257 (E257) interacts with Mg(2+).

This sequence belongs to the class-II aminoacyl-tRNA synthetase family. Phe-tRNA synthetase alpha subunit type 1 subfamily. As to quaternary structure, tetramer of two alpha and two beta subunits. Requires Mg(2+) as cofactor.

The protein localises to the cytoplasm. It carries out the reaction tRNA(Phe) + L-phenylalanine + ATP = L-phenylalanyl-tRNA(Phe) + AMP + diphosphate + H(+). This is Phenylalanine--tRNA ligase alpha subunit from Nostoc sp. (strain PCC 7120 / SAG 25.82 / UTEX 2576).